A 314-amino-acid polypeptide reads, in one-letter code: Probable cell division protein WhiA (314 aa).

Positions serine 275–arginine 309 form a DNA-binding region, H-T-H motif.

This sequence belongs to the WhiA family.

Its function is as follows. Involved in cell division and chromosome segregation. This chain is Probable cell division protein WhiA, found in Oceanobacillus iheyensis (strain DSM 14371 / CIP 107618 / JCM 11309 / KCTC 3954 / HTE831).